The primary structure comprises 459 residues: Bifunctional protein GlmU (459 aa).

A pyrophosphorylase region spans residues 1–229; sequence MTNYAIILAA…FDESLGVNDR (229 aa). Residues 8 to 11, Lys-22, Gln-72, and 77 to 78 contribute to the UDP-N-acetyl-alpha-D-glucosamine site; these read LAAG and GT. Asp-102 contacts Mg(2+). 4 residues coordinate UDP-N-acetyl-alpha-D-glucosamine: Gly-139, Glu-154, Asn-169, and Asn-227. A Mg(2+)-binding site is contributed by Asn-227. The segment at 230-250 is linker; the sequence is VALATAESVMRRRINQQHMVN. Residues 251 to 459 are N-acetyltransferase; the sequence is GVSFVNPHAT…KRLPHHPQNK (209 aa). Arg-332 and Lys-350 together coordinate UDP-N-acetyl-alpha-D-glucosamine. His-362 (proton acceptor) is an active-site residue. UDP-N-acetyl-alpha-D-glucosamine is bound by residues Tyr-365 and Asn-376. Acetyl-CoA-binding positions include Ala-379, 385–386, Ser-404, Ala-422, and Arg-439; that span reads NY.

The protein in the N-terminal section; belongs to the N-acetylglucosamine-1-phosphate uridyltransferase family. This sequence in the C-terminal section; belongs to the transferase hexapeptide repeat family. As to quaternary structure, homotrimer. Mg(2+) serves as cofactor.

Its subcellular location is the cytoplasm. It catalyses the reaction alpha-D-glucosamine 1-phosphate + acetyl-CoA = N-acetyl-alpha-D-glucosamine 1-phosphate + CoA + H(+). The catalysed reaction is N-acetyl-alpha-D-glucosamine 1-phosphate + UTP + H(+) = UDP-N-acetyl-alpha-D-glucosamine + diphosphate. The protein operates within nucleotide-sugar biosynthesis; UDP-N-acetyl-alpha-D-glucosamine biosynthesis; N-acetyl-alpha-D-glucosamine 1-phosphate from alpha-D-glucosamine 6-phosphate (route II): step 2/2. It participates in nucleotide-sugar biosynthesis; UDP-N-acetyl-alpha-D-glucosamine biosynthesis; UDP-N-acetyl-alpha-D-glucosamine from N-acetyl-alpha-D-glucosamine 1-phosphate: step 1/1. Its pathway is bacterial outer membrane biogenesis; LPS lipid A biosynthesis. Functionally, catalyzes the last two sequential reactions in the de novo biosynthetic pathway for UDP-N-acetylglucosamine (UDP-GlcNAc). The C-terminal domain catalyzes the transfer of acetyl group from acetyl coenzyme A to glucosamine-1-phosphate (GlcN-1-P) to produce N-acetylglucosamine-1-phosphate (GlcNAc-1-P), which is converted into UDP-GlcNAc by the transfer of uridine 5-monophosphate (from uridine 5-triphosphate), a reaction catalyzed by the N-terminal domain. The sequence is that of Bifunctional protein GlmU from Streptococcus sanguinis (strain SK36).